The following is a 502-amino-acid chain: L-ornithine N(5)-monooxygenase (502 aa).

The segment covering 1–10 (MEPVERKLEI) has biased composition (basic and acidic residues). The disordered stretch occupies residues 1–34 (MEPVERKLEIGSRSYSKMPLTQQRSSGEPPRLKA). Polar residues predominate over residues 13 to 26 (RSYSKMPLTQQRSS). FAD-binding positions include 83–91 (ERQKQFAWH) and Gln-102. Lys-107 contributes to the substrate binding site. An FAD-binding site is contributed by Val-168. NADP(+) is bound by residues 254–257 (SGQS) and Arg-279. Residues 293–296 (NEVF) and Asn-323 each bind substrate. NADP(+) is bound at residue 323–325 (NYS). 466-468 (SLL) is an FAD binding site. Ser-469 contributes to the substrate binding site.

The protein belongs to the lysine N(6)-hydroxylase/L-ornithine N(5)-oxygenase family. Homotetramer. The cofactor is FAD.

The enzyme catalyses L-ornithine + NADPH + O2 = N(5)-hydroxy-L-ornithine + NADP(+) + H2O. It catalyses the reaction L-ornithine + NADH + O2 = N(5)-hydroxy-L-ornithine + NAD(+) + H2O. It functions in the pathway siderophore biosynthesis. Functionally, catalyzes the conversion of L-ornithine to N(5)-hydroxyornithine, the first step in the biosynthesis of all hydroxamate-containing siderophores, such as deferriferrichrysin. In Aspergillus oryzae (strain ATCC 42149 / RIB 40) (Yellow koji mold), this protein is L-ornithine N(5)-monooxygenase.